The following is a 309-amino-acid chain: Probable sugar phosphate/phosphate translocator At5g05820 (309 aa).

The next 10 membrane-spanning stretches (helical) occupy residues Phe9–Asn29, Ile42–Trp62, Phe77–Ser97, Phe100–Phe120, Ala130–Gly150, Phe154–Val174, Leu192–Glu212, Ile229–Leu249, Ala256–Phe278, and Val282–Ser301. Positions Lys30–Ala147 constitute an EamA domain.

Belongs to the TPT transporter family. TPT (TC 2.A.7.9) subfamily.

The protein localises to the membrane. This Arabidopsis thaliana (Mouse-ear cress) protein is Probable sugar phosphate/phosphate translocator At5g05820.